The sequence spans 150 residues: MKCPFCGQLDSKVVDSRPDKGGAAIRRRRECESCGKRFTTHERIEEVLPLVLKKDGRREPFDRLKLIAGIQKACEKRQVSRETIERLVDRLEARLPELGEKEVPSTTIGEWVMTELHDIDEVAYVRFASVYRSFKDVNEFMSELQDLLKK.

A zinc finger spans residues 3–34 (CPFCGQLDSKVVDSRPDKGGAAIRRRRECESC). The region spanning 49 to 139 (PLVLKKDGRR…VYRSFKDVNE (91 aa)) is the ATP-cone domain.

Belongs to the NrdR family. Zn(2+) serves as cofactor.

Functionally, negatively regulates transcription of bacterial ribonucleotide reductase nrd genes and operons by binding to NrdR-boxes. The sequence is that of Transcriptional repressor NrdR from Geobacter sulfurreducens (strain ATCC 51573 / DSM 12127 / PCA).